The sequence spans 480 residues: Adenosylhomocysteinase (480 aa).

Thr63, Asp142, and Glu203 together coordinate substrate. Residue 204–206 participates in NAD(+) binding; the sequence is TTT. Substrate-binding residues include Lys233 and Asp237. Residues Asn238, 267-272, Glu290, Asn325, 346-348, and Asn394 each bind NAD(+); these read GYGDVG and IGH.

Belongs to the adenosylhomocysteinase family. NAD(+) is required as a cofactor.

Its subcellular location is the cytoplasm. The enzyme catalyses S-adenosyl-L-homocysteine + H2O = L-homocysteine + adenosine. The protein operates within amino-acid biosynthesis; L-homocysteine biosynthesis; L-homocysteine from S-adenosyl-L-homocysteine: step 1/1. May play a key role in the regulation of the intracellular concentration of adenosylhomocysteine. The protein is Adenosylhomocysteinase of Xylella fastidiosa (strain 9a5c).